A 1463-amino-acid polypeptide reads, in one-letter code: Secretory phospholipase A2 receptor (1463 aa).

Residues 1 to 20 form the signal peptide; that stretch reads MPLLSLSLLLLLLQVPAGSA. Topologically, residues 21–1392 are extracellular; sequence ETAAWAVTPE…IHTVKKHPGK (1372 aa). Positions 38 to 115 constitute a Ricin B-type lectin domain; the sequence is KGIFIIQSEN…CDSTHVSLKW (78 aa). Asparagine 93 is a glycosylation site (N-linked (GlcNAc...) asparagine). The Fibronectin type-II domain maps to 173-221; it reads AHGTPCMFPFQYNQQWHHECTREGREDNLLWCATTSRYERDEKWGFCPD. Intrachain disulfides connect cysteine 178–cysteine 204, cysteine 192–cysteine 219, cysteine 260–cysteine 354, cysteine 330–cysteine 346, cysteine 406–cysteine 501, cysteine 478–cysteine 493, cysteine 617–cysteine 634, cysteine 699–cysteine 796, cysteine 774–cysteine 788, cysteine 840–cysteine 938, cysteine 915–cysteine 930, cysteine 992–cysteine 1096, cysteine 1068–cysteine 1088, cysteine 1209–cysteine 1223, cysteine 1280–cysteine 1377, and cysteine 1354–cysteine 1369. C-type lectin domains follow at residues 229–353, 357–500, 504–641, 646–795, 799–937, 941–1095, 1099–1230, and 1235–1376; these read CDAV…LPYV, YLNP…LFYL, TGLV…KAMS, PVEN…REWI, PRDV…MPSI, KKVW…YGFV, MQDA…LQGA, and PTET…KGFI. Residue asparagine 454 is glycosylated (N-linked (GlcNAc...) asparagine). Asparagine 1057 is a glycosylation site (N-linked (GlcNAc...) asparagine). A helical membrane pass occupies residues 1393-1421; sequence GPSHSVIPLTVALTLLVILAISTLSFCMY. Topologically, residues 1422 to 1463 are cytoplasmic; sequence KHSHIIFGRLAQFRNPYYPSANFSTVHLEENILISDLEKNDQ. The Endocytosis signal signature appears at 1436 to 1442; sequence NPYYPSA.

Interacts with sPLA2-IB/PLA2G1B; this interaction mediates intracellular signaling as well as clearance of extracellular sPLA2-IB/PLA2G1B via endocytotic pathway. Interacts with sPLA2-X/PLA2G10; this interaction mediates sPLA2-X/PLA2G10 clearance and inactivation. The secretory phospholipase A2 receptor form may be produced by the action of metalloproteinases. It contains all extracellular domains and only lacks transmembrane and cytosolic regions. It is however unclear whether this form is produced by proteolytic cleavage as suggested by some experiments, or by alternative splicing.

The protein resides in the cell membrane. Its subcellular location is the secreted. Its function is as follows. Receptor for secretory phospholipase A2 (sPLA2). Also able to bind to snake PA2-like toxins. Although its precise function remains unclear, binding of sPLA2 to its receptor participates in both positive and negative regulation of sPLA2 functions as well as clearance of sPLA2. Binding of sPLA2-IB/PLA2G1B induces various effects depending on the cell type, such as activation of the mitogen-activated protein kinase (MAPK) cascade to induce cell proliferation, the production of lipid mediators, selective release of arachidonic acid in bone marrow-derived mast cells. In neutrophils, binding of sPLA2-IB/PLA2G1B can activate p38 MAPK to stimulate elastase release and cell adhesion. May be involved in responses in pro-inflammatory cytokine productions during endotoxic shock. Also has endocytic properties and rapidly internalizes sPLA2 ligands, which is particularly important for the clearance of extracellular sPLA2s to protect their potent enzymatic activities. The soluble secretory phospholipase A2 receptor form is circulating and acts as a negative regulator of sPLA2 functions by blocking the biological functions of sPLA2-IB/PLA2G1B and sPLA2-X/PLA2G10. This Bos taurus (Bovine) protein is Secretory phospholipase A2 receptor (PLA2R1).